A 99-amino-acid chain; its full sequence is Acylphosphatase-1 (99 aa).

A2 is modified (N-acetylalanine). The Acylphosphatase-like domain maps to 9-99 (SVDYEVSGRV…LEHTDFQIRK (91 aa)). Residues R24 and N42 contribute to the active site.

It belongs to the acylphosphatase family. Organ-common type isozyme is found in many different tissues.

It catalyses the reaction an acyl phosphate + H2O = a carboxylate + phosphate + H(+). The chain is Acylphosphatase-1 (ACYP1) from Gallus gallus (Chicken).